Here is a 248-residue protein sequence, read N- to C-terminus: 23S rRNA (guanosine-2'-O-)-methyltransferase RlmB (248 aa).

Residues G198, L218, and L227 each contribute to the S-adenosyl-L-methionine site.

This sequence belongs to the class IV-like SAM-binding methyltransferase superfamily. RNA methyltransferase TrmH family. RlmB subfamily.

The protein localises to the cytoplasm. It carries out the reaction guanosine(2251) in 23S rRNA + S-adenosyl-L-methionine = 2'-O-methylguanosine(2251) in 23S rRNA + S-adenosyl-L-homocysteine + H(+). Specifically methylates the ribose of guanosine 2251 in 23S rRNA. The protein is 23S rRNA (guanosine-2'-O-)-methyltransferase RlmB of Pseudomonas aeruginosa (strain ATCC 15692 / DSM 22644 / CIP 104116 / JCM 14847 / LMG 12228 / 1C / PRS 101 / PAO1).